We begin with the raw amino-acid sequence, 175 residues long: Snake venom metalloproteinase BpMP-1 (175 aa).

The Peptidase M12B domain occupies 1 to 175; sequence YIELAVVADH…KHNPQCILNK (175 aa). 2 residues coordinate Ca(2+): Glu-3 and Asp-74. 3 cysteine pairs are disulfide-bonded: Cys-98–Cys-171, Cys-131–Cys-155, and Cys-133–Cys-138. Residue His-117 participates in Zn(2+) binding. Glu-118 is an active-site residue. Zn(2+)-binding residues include His-121 and His-127. 2 residues coordinate Ca(2+): Cys-171 and Asn-174.

It belongs to the venom metalloproteinase (M12B) family. P-I subfamily. As to quaternary structure, monomer. Requires Zn(2+) as cofactor. As to expression, expressed by the venom gland.

The protein resides in the secreted. Its activity is regulated as follows. Inhibited by EDTA, 1,10-phenanthroline and beta-mercaptoethanol. Not inhibited by the serine protease inhibitors aprotinin and benzamidin. Functionally, non-hemorrhagic snake venom zinc metalloprotease that hydrolyzes the Aalpha-chain of fibrinogen, more slowly the Bbeta-chain and shows no effect on the gamma chain. Has no coagulant activity on bovine plasma and fibrinogen. The sequence is that of Snake venom metalloproteinase BpMP-1 from Bothrops pauloensis (Neuwied's lancehead).